The following is a 378-amino-acid chain: IDS-type sesquiterpene synthase (378 aa).

Positions 120 and 124 each coordinate Mg(2+). The DDXXD motif signature appears at 120–124; sequence DDYVD.

This sequence belongs to the terpene synthase family. It depends on Mg(2+) as a cofactor. Highly expressed in male epidermal tissue associated with the cuticle of ventral sternites.

The enzyme catalyses (2Z,6E)-farnesyl diphosphate = (Z)-alpha-bisabolene + diphosphate. Its pathway is pheromone biosynthesis. Functionally, sesquiterpene alcohol synthase that catalyzes the formation of the pheromone precursor (Z)-alpha-bisabolene from (2Z,6E)-farnesyl diphosphate. This chain is IDS-type sesquiterpene synthase, found in Nezara viridula (Southern green stink bug).